A 528-amino-acid polypeptide reads, in one-letter code: Tyrosine--tRNA ligase, cytoplasmic (528 aa).

Position 1 is an N-acetylmethionine (M1). N-acetylglycine; in Tyrosine--tRNA ligase, cytoplasmic, N-terminally processed is present on G2. Y39 provides a ligand contact to L-tyrosine. Y39 serves as a coordination point for trans-resveratrol. The 'HIGH' region signature appears at 44–52 (TTGKPHVAY). Residues Y166, Q170, D173, and Q188 each contribute to the L-tyrosine site. Q170 and D173 together coordinate trans-resveratrol. K197 carries the post-translational modification N6-acetyllysine. S205 carries the phosphoserine modification. The residue at position 206 (K206) is an N6-acetyllysine. The 'KMSKS' region motif lies at 222–226 (KMSSS). The short motif at 242-247 (KKKLKK) is the Nuclear localization signal element. The disordered stretch occupies residues 339–363 (AAYPDPSKQKPTAKGPAKSSEPEEI). In terms of domain architecture, tRNA-binding spans 364–468 (IPSRLDIRVG…AGSAPGERVF (105 aa)). S386 bears the Phosphoserine mark. 3 positions are modified to N6-acetyllysine: K474, K482, and K490.

This sequence belongs to the class-I aminoacyl-tRNA synthetase family. As to quaternary structure, homodimer. Interacts (when binding to resveratrol) with PARP1; interaction stimulates the poly-ADP-ribosyltransferase activity of PARP1.

It localises to the cytoplasm. The protein resides in the nucleus. The catalysed reaction is tRNA(Tyr) + L-tyrosine + ATP = L-tyrosyl-tRNA(Tyr) + AMP + diphosphate + H(+). Resveratrol strongly inhibits the tyrosine--tRNA ligase activity. Its function is as follows. Tyrosine--tRNA ligase that catalyzes the attachment of tyrosine to tRNA(Tyr) in a two-step reaction: tyrosine is first activated by ATP to form Tyr-AMP and then transferred to the acceptor end of tRNA(Tyr). Also acts as a positive regulator of poly-ADP-ribosylation in the nucleus, independently of its tyrosine--tRNA ligase activity. Activity is switched upon resveratrol-binding: resveratrol strongly inhibits the tyrosine--tRNA ligase activity and promotes relocalization to the nucleus, where YARS1 specifically stimulates the poly-ADP-ribosyltransferase activity of PARP1. The chain is Tyrosine--tRNA ligase, cytoplasmic (Yars1) from Rattus norvegicus (Rat).